A 104-amino-acid chain; its full sequence is Large ribosomal subunit protein bL21c (104 aa).

This sequence belongs to the bacterial ribosomal protein bL21 family. In terms of assembly, part of the 50S ribosomal subunit.

The protein resides in the plastid. The protein localises to the chloroplast. Its function is as follows. This protein binds to 23S rRNA. This Pyropia yezoensis (Susabi-nori) protein is Large ribosomal subunit protein bL21c.